The chain runs to 4481 residues: Dynein axonemal heavy chain 17 (4481 aa).

The interval 1-1792 (MPDLRIDYLE…FANICDAQIK (1792 aa)) is stem. The stretch at 521–569 (LLYMCGGLLERPLILVEVVPRYSVMLEMFNTELDNAKLMYDAQMAASAD) is one Kelch 1 repeat. A coiled-coil region spans residues 759–826 (ENVMEYIQEM…GRVANLNKRY (68 aa)). TPR repeat units follow at residues 1533–1566 (VVEA…YLET) and 1688–1722 (IWWT…QLNA). AAA stretches follow at residues 1793–2014 (YSYE…VLVV), 2074–2295 (KIIK…IGFK), 2401–2649 (ELDP…IFQG), and 2747–2996 (SYNE…ERRY). ATP contacts are provided by residues 1831-1838 (GPAGTGKT) and 2112-2119 (GNAGSGKS). Residues 2229–2275 (ISHLRTATPATVSRAGILYINPADLGWNPVVSSWIERRKVQSEKANL) form a Kelch 2 repeat. Residues 2439–2446 (GNAGTGKS) and 2785–2792 (GVGGSGKQ) contribute to the ATP site. Residues 2782 to 2834 (LLVGVGGSGKQSLSRLAAYISALDVFQITLKKGYAIPDLKMDLATQYIKSAVK) form a Kelch 3 repeat. 2 coiled-coil regions span residues 3011–3071 (YQNL…IQVV) and 3241–3293 (DVAP…EKIK). The tract at residues 3011–3297 (YQNLLAKKRM…TAEKIKCQQE (287 aa)) is stalk. AAA stretches follow at residues 3389–3616 (LTDD…EIEE) and 3826–4059 (VKNF…VLYN). The TPR 3 repeat unit spans residues 4138-4173 (PESPYLYGLHPNAEIGFLTVTSEKLFRTVLEMQPKE). Kelch repeat units follow at residues 4272-4321 (NLGL…DLLQ) and 4339-4385 (VWLA…DMTA).

This sequence belongs to the dynein heavy chain family. In terms of assembly, consists of at least two heavy chains and a number of intermediate and light chains.

The protein localises to the cytoplasm. It is found in the cytoskeleton. It localises to the flagellum axoneme. Force generating protein component of the outer dynein arms (ODAs) in the sperm flagellum. Produces force towards the minus ends of microtubules. Dynein has ATPase activity; the force-producing power stroke is thought to occur on release of ADP. Plays a major role in sperm motility, implicated in sperm flagellar assembly and beating. This is Dynein axonemal heavy chain 17 from Mus musculus (Mouse).